We begin with the raw amino-acid sequence, 362 residues long: Outer membrane porin F (362 aa).

The first 22 residues, 1–22 (MMKRNILAVIVPALLVAGTANA), serve as a signal peptide directing secretion.

It belongs to the Gram-negative porin family. As to quaternary structure, homotrimer. Forms mixed heterotrimers with OmpC; other mixed heterotrimers are also probable.

It is found in the cell outer membrane. Its function is as follows. Forms pores that allow passive diffusion of small molecules across the outer membrane. In terms of biological role, (Microbial infection) Is the major receptor for colicin E5. (Microbial infection) A mixed OmpC-OmpF heterotrimer is the outer membrane receptor for toxin CdiA-EC536. This chain is Outer membrane porin F (ompF), found in Escherichia coli O6:K15:H31 (strain 536 / UPEC).